We begin with the raw amino-acid sequence, 353 residues long: Histidinol-phosphate aminotransferase (353 aa).

K211 bears the N6-(pyridoxal phosphate)lysine mark.

This sequence belongs to the class-II pyridoxal-phosphate-dependent aminotransferase family. Histidinol-phosphate aminotransferase subfamily. In terms of assembly, homodimer. Pyridoxal 5'-phosphate is required as a cofactor.

It catalyses the reaction L-histidinol phosphate + 2-oxoglutarate = 3-(imidazol-4-yl)-2-oxopropyl phosphate + L-glutamate. It participates in amino-acid biosynthesis; L-histidine biosynthesis; L-histidine from 5-phospho-alpha-D-ribose 1-diphosphate: step 7/9. The polypeptide is Histidinol-phosphate aminotransferase (Klebsiella pneumoniae (strain 342)).